A 432-amino-acid polypeptide reads, in one-letter code: Negative regulator of systemic acquired resistance SNI1 (432 aa).

Interacts with SSN2. Binds to NTL9/CBNAC to promote its binding to promoters of target genes. Component of the SMC5-SMC6 complex which consists at least of SMC5 and SMC6B. Interacts with RAD17. As to expression, expressed at low levels in the veins.

It localises to the nucleus. In terms of biological role, component of the SMC5-SMC6 complex, a complex involved in repair of DNA double-strand breaks by homologous recombination. Transcription repressor that prevents expression of pathogenesis-related genes (PR) via histone modifications and binding negative cis-acting elements at their promoters. Negative regulator of hypersensitive response (HR) and systemic acquired resistance (SAR) required to dampen the basal expression of pathogenesis related (PR) genes. Functions synergistically with NTL9/CBNAC as negative regulator of pathogen-induced PR1 expression and basal resistance to a virulent strain of P.syringae. Binds to the PR1 gene promoter to suppress defense response in the absence of pathogen challenge and is removed in response to induction. Negatively regulates both gene expression and DNA recombination during pathogen infection, thus being involved in short-term defense response and a long-term survival strategy. Prevents effective immune responses that involve activation of DNA damage responses, probably by negatively regulating the DNA damage sensors RAD17 and ATR. Negative regulator of defenses against the beet cyst nematode H.schachtii. The sequence is that of Negative regulator of systemic acquired resistance SNI1 from Arabidopsis thaliana (Mouse-ear cress).